A 388-amino-acid polypeptide reads, in one-letter code: Chorismate synthase (388 aa).

NADP(+) contacts are provided by R39 and R45. FMN contacts are provided by residues 130–132 (RSS), 251–252 (NA), G296, 311–315 (KPIPT), and R337.

The protein belongs to the chorismate synthase family. Homotetramer. It depends on FMNH2 as a cofactor.

It carries out the reaction 5-O-(1-carboxyvinyl)-3-phosphoshikimate = chorismate + phosphate. The protein operates within metabolic intermediate biosynthesis; chorismate biosynthesis; chorismate from D-erythrose 4-phosphate and phosphoenolpyruvate: step 7/7. In terms of biological role, catalyzes the anti-1,4-elimination of the C-3 phosphate and the C-6 proR hydrogen from 5-enolpyruvylshikimate-3-phosphate (EPSP) to yield chorismate, which is the branch point compound that serves as the starting substrate for the three terminal pathways of aromatic amino acid biosynthesis. This reaction introduces a second double bond into the aromatic ring system. In Streptococcus mutans serotype c (strain ATCC 700610 / UA159), this protein is Chorismate synthase.